We begin with the raw amino-acid sequence, 123 residues long: Large ribosomal subunit protein uL14 (123 aa).

It belongs to the universal ribosomal protein uL14 family. In terms of assembly, part of the 50S ribosomal subunit. Forms a cluster with proteins L3 and L19. In the 70S ribosome, L14 and L19 interact and together make contacts with the 16S rRNA in bridges B5 and B8.

Functionally, binds to 23S rRNA. Forms part of two intersubunit bridges in the 70S ribosome. The sequence is that of Large ribosomal subunit protein uL14 from Vibrio vulnificus (strain CMCP6).